Consider the following 209-residue polypeptide: Uracil phosphoribosyltransferase (209 aa).

5-phospho-alpha-D-ribose 1-diphosphate contacts are provided by residues arginine 79, arginine 104, and 131–139 (DPMLATGGS). Residues isoleucine 194 and 199–201 (GDA) each bind uracil. Aspartate 200 contacts 5-phospho-alpha-D-ribose 1-diphosphate.

Belongs to the UPRTase family. The cofactor is Mg(2+).

It catalyses the reaction UMP + diphosphate = 5-phospho-alpha-D-ribose 1-diphosphate + uracil. The protein operates within pyrimidine metabolism; UMP biosynthesis via salvage pathway; UMP from uracil: step 1/1. Its activity is regulated as follows. Allosterically activated by GTP. Functionally, catalyzes the conversion of uracil and 5-phospho-alpha-D-ribose 1-diphosphate (PRPP) to UMP and diphosphate. This is Uracil phosphoribosyltransferase from Streptococcus uberis (strain ATCC BAA-854 / 0140J).